Reading from the N-terminus, the 523-residue chain is UDP-glucuronosyltransferase 3A1 (523 aa).

The signal sequence occupies residues 1–23 (MAVGRKSLILSLLIQHFVLLHGA). Over 24–483 (KILTVCFLGG…YSYQQPLYQQ (460 aa)) the chain is Extracellular. Asparagine 125 carries N-linked (GlcNAc...) asparagine glycosylation. The helical transmembrane segment at 484–504 (YLLDVFLFVCVCVIGACYLTV) threads the bilayer. The Cytoplasmic segment spans residues 505–523 (KLLKMFIQKLCSFRKLKQN).

It belongs to the UDP-glycosyltransferase family.

It localises to the membrane. It carries out the reaction glucuronate acceptor + UDP-alpha-D-glucuronate = acceptor beta-D-glucuronoside + UDP + H(+). Functionally, UDP-glucuronosyltransferases catalyze phase II biotransformation reactions in which lipophilic substrates are conjugated with glucuronic acid to increase water solubility and enhance excretion. They are of major importance in the conjugation and subsequent elimination of potentially toxic xenobiotics and endogenous compounds. The sequence is that of UDP-glucuronosyltransferase 3A1 (ugt3a1) from Xenopus laevis (African clawed frog).